The chain runs to 465 residues: Chromosomal replication initiator protein DnaA (465 aa).

Residues 1–85 (MSGFWESCLQ…IALVIGSGKA (85 aa)) form a domain I, interacts with DnaA modulators region. The segment at 85-129 (ATAARIQATTTDSGQNAPANPATTSEKRTAASEKARGKGSNYEKS) is domain II. Residues 93–108 (TTTDSGQNAPANPATT) show a composition bias toward polar residues. Residues 93–125 (TTTDSGQNAPANPATTSEKRTAASEKARGKGSN) are disordered. Residues 109 to 125 (SEKRTAASEKARGKGSN) show a composition bias toward basic and acidic residues. The interval 130-346 (RLFPSFTFDN…GALKKVLAYS (217 aa)) is domain III, AAA+ region. 4 residues coordinate ATP: Gly-174, Gly-176, Lys-177, and Thr-178. The segment at 347-465 (SFHGRVIALD…LHVLLQVLKG (119 aa)) is domain IV, binds dsDNA.

This sequence belongs to the DnaA family. In terms of assembly, oligomerizes as a right-handed, spiral filament on DNA at oriC.

The protein resides in the cytoplasm. Plays an essential role in the initiation and regulation of chromosomal replication. ATP-DnaA binds to the origin of replication (oriC) to initiate formation of the DNA replication initiation complex once per cell cycle. Binds the DnaA box (a 9 base pair repeat at the origin) and separates the double-stranded (ds)DNA. Forms a right-handed helical filament on oriC DNA; dsDNA binds to the exterior of the filament while single-stranded (ss)DNA is stabiized in the filament's interior. The ATP-DnaA-oriC complex binds and stabilizes one strand of the AT-rich DNA unwinding element (DUE), permitting loading of DNA polymerase. After initiation quickly degrades to an ADP-DnaA complex that is not apt for DNA replication. Binds acidic phospholipids. This is Chromosomal replication initiator protein DnaA from Dechloromonas aromatica (strain RCB).